Consider the following 177-residue polypeptide: uncharacterized protein (177 aa).

4 helical membrane passes run 4–24 (IIIL…GFIL), 33–53 (ILSI…LHWI), 80–100 (IAFI…GSFL), and 115–135 (MLGA…LLYV).

It is found in the cell membrane. This is an uncharacterized protein from Bacillus subtilis (strain 168).